We begin with the raw amino-acid sequence, 395 residues long: ATP synthase subunit a (395 aa).

5 consecutive transmembrane segments (helical) span residues 153 to 173, 246 to 266, 273 to 293, 313 to 333, and 339 to 359; these read FTNP…LVYF, HFLI…IVGF, FLSF…LVLL, MMAG…MLCM, and FIGD…ELGV.

Belongs to the ATPase A chain family. In terms of assembly, F-type ATPases have 2 components, CF(1) - the catalytic core - and CF(0) - the membrane proton channel. CF(1) has five subunits: alpha(3), beta(3), gamma(1), delta(1), epsilon(1). CF(0) has three main subunits: a, b and c.

The protein resides in the mitochondrion inner membrane. In terms of biological role, mitochondrial membrane ATP synthase (F(1)F(0) ATP synthase or Complex V) produces ATP from ADP in the presence of a proton gradient across the membrane which is generated by electron transport complexes of the respiratory chain. F-type ATPases consist of two structural domains, F(1) - containing the extramembraneous catalytic core and F(0) - containing the membrane proton channel, linked together by a central stalk and a peripheral stalk. During catalysis, ATP synthesis in the catalytic domain of F(1) is coupled via a rotary mechanism of the central stalk subunits to proton translocation. Key component of the proton channel; it may play a direct role in the translocation of protons across the membrane. The chain is ATP synthase subunit a (ATP6) from Nicotiana tabacum (Common tobacco).